We begin with the raw amino-acid sequence, 286 residues long: Secretory carrier-associated membrane protein 2 (286 aa).

Basic and acidic residues-rich tracts occupy residues 1–10 and 54–63; these read MAGRYDRNPF and STKDMKKKEK. Positions 1 to 63 are disordered; sequence MAGRYDRNPF…STKDMKKKEK (63 aa). Topologically, residues 1 to 126 are cytoplasmic; the sequence is MAGRYDRNPF…LQRMQYLAFS (126 aa). The stretch at 52-89 forms a coiled coil; it reads LDSTKDMKKKEKELQAKEAELNKRESELRRREEAASRA. 4 helical membrane-spanning segments follow: residues 127 to 147, 152 to 172, 189 to 209, and 237 to 257; these read SLLG…AAWI, VMIW…AYVL, FGWF…SAVA, and IFYF…VVVI. Residues 258–286 lie on the Cytoplasmic side of the membrane; it reads QQVYMYFRGSGKAAEMKREAARGAMRSAF.

The protein belongs to the SCAMP family.

It is found in the cell membrane. Its subcellular location is the cytoplasmic vesicle. It localises to the secretory vesicle membrane. Its function is as follows. Probably involved in membrane trafficking. The sequence is that of Secretory carrier-associated membrane protein 2 (SCAMP2) from Oryza sativa subsp. japonica (Rice).